Consider the following 103-residue polypeptide: Small ribosomal subunit protein uS14c (103 aa).

Belongs to the universal ribosomal protein uS14 family. In terms of assembly, part of the 30S ribosomal subunit.

The protein resides in the plastid. Its subcellular location is the chloroplast. Functionally, binds 16S rRNA, required for the assembly of 30S particles. This Lolium perenne (Perennial ryegrass) protein is Small ribosomal subunit protein uS14c.